A 360-amino-acid chain; its full sequence is Ferredoxin--NADP reductase (360 aa).

FAD contacts are provided by T25, E44, Q52, Y57, V97, F132, D298, and S339.

It belongs to the ferredoxin--NADP reductase type 2 family. Homodimer. It depends on FAD as a cofactor.

It carries out the reaction 2 reduced [2Fe-2S]-[ferredoxin] + NADP(+) + H(+) = 2 oxidized [2Fe-2S]-[ferredoxin] + NADPH. This is Ferredoxin--NADP reductase from Chlorobaculum tepidum (strain ATCC 49652 / DSM 12025 / NBRC 103806 / TLS) (Chlorobium tepidum).